Reading from the N-terminus, the 1526-residue chain is High affinity cGMP-specific 3',5'-cyclic phosphodiesterase 9A (1526 aa).

Low complexity predominate over residues 1 to 43; it reads MYQDSGCSSSSSRRGSSSAAAATSTAATAAETAAAAAATTTSS. 3 disordered regions span residues 1–48, 266–348, and 393–476; these read MYQD…DEET, SSRS…SGTA, and RHHH…ASDC. Basic and acidic residues-rich tracts occupy residues 270-282 and 305-314; these read RSSELEDDHHEQD and EHPSEKPERT. Composition is skewed to low complexity over residues 324–348 and 401–440; these read IAVTTTTTATVRRKSSSSSTISGTA and QQHQQQQRITNNNNNNNNCNSIQNNNNMSNPAATAAATAT. A compositionally biased stretch (polar residues) spans 441–462; that stretch reads PSVEQPATSGTTNIHLQPTSLP. The PDEase domain maps to 664-985; sequence VKRRFLEICD…EYYRRLNDAQ (322 aa). The active-site Proton donor is H740. 740-744 contributes to the 3',5'-cyclic GMP binding site; sequence HNFRH. Zn(2+) contacts are provided by H744, H780, D781, and D890. D781 and D890 together coordinate 3',5'-cyclic GMP. Residue D781 coordinates Mg(2+). Disordered regions lie at residues 986 to 1170, 1265 to 1284, 1314 to 1351, 1372 to 1406, and 1469 to 1496; these read TKTR…SSGG, TEADSDGEGDGNGREDKKIP, SNGSTRSSASSGRGGSGVPGGSGGSGMPGPSAGSGSSW, RFGSTRSSPCPGSNSSSGRTNNNANGLGENQDGLG, and RYSSNDSSRHPSNNTLQSAGGGAGLTTG. Low complexity predominate over residues 993–1005; it reads ADSNTSATSDSNS. The span at 1033-1057 shows a compositional bias: gly residues; it reads NSQGSGGGGGGGGGGGAGGGTGSGC. Over residues 1065–1093 the composition is skewed to polar residues; that stretch reads VSPQMPRSGSGISVKSRRSIPSQKSASRT. Residues 1125–1136 are compositionally biased toward basic and acidic residues; sequence VAEKTSKFKVDT. Positions 1139–1148 are enriched in low complexity; sequence SSNRSKSSHS. The segment covering 1314 to 1324 has biased composition (low complexity); it reads SNGSTRSSASS. The span at 1325 to 1340 shows a compositional bias: gly residues; the sequence is GRGGSGVPGGSGGSGM. 2 stretches are compositionally biased toward low complexity: residues 1341-1350 and 1375-1397; these read PGPSAGSGSS and STRSSPCPGSNSSSGRTNNNANG. Residues 1470–1486 show a composition bias toward polar residues; it reads YSSNDSSRHPSNNTLQS.

This sequence belongs to the cyclic nucleotide phosphodiesterase family. PDE9 subfamily. Zn(2+) is required as a cofactor. It depends on Mg(2+) as a cofactor. In terms of tissue distribution, expressed in Malpighian tubules and adult fly head.

The enzyme catalyses 3',5'-cyclic GMP + H2O = GMP + H(+). It functions in the pathway purine metabolism; 3',5'-cyclic GMP degradation; GMP from 3',5'-cyclic GMP: step 1/1. Its function is as follows. Specifically hydrolyzes the second messenger cGMP, which is a key regulator of many important physiological processes. Highly specific: compared to other members of the cyclic nucleotide phosphodiesterase family, has the highest affinity and selectivity for cGMP. This chain is High affinity cGMP-specific 3',5'-cyclic phosphodiesterase 9A, found in Drosophila melanogaster (Fruit fly).